Consider the following 516-residue polypeptide: Probable cytochrome P450 9f2 (516 aa).

Cys-460 serves as a coordination point for heme.

Belongs to the cytochrome P450 family. The cofactor is heme.

The protein resides in the endoplasmic reticulum membrane. Its subcellular location is the microsome membrane. Its function is as follows. May be involved in the metabolism of insect hormones and in the breakdown of synthetic insecticides. The protein is Probable cytochrome P450 9f2 (Cyp9f2) of Drosophila melanogaster (Fruit fly).